The primary structure comprises 228 residues: DNA repair and recombination protein RadB (228 aa).

Belongs to the eukaryotic RecA-like protein family. RadB subfamily.

Functionally, involved in DNA repair and in homologous recombination. May regulate the cleavage reactions of the branch-structured DNA. Has a very weak ATPase activity that is not stimulated by DNA. Binds DNA but does not promote DNA strands exchange. This Thermococcus sibiricus (strain DSM 12597 / MM 739) protein is DNA repair and recombination protein RadB.